Here is a 96-residue protein sequence, read N- to C-terminus: Co-chaperonin GroES (96 aa).

Positions 26–48 are disordered; it reads LLPGSAQEKPSQGEVLATGNGQI.

Belongs to the GroES chaperonin family. In terms of assembly, heptamer of 7 subunits arranged in a ring. Interacts with the chaperonin GroEL.

Its subcellular location is the cytoplasm. Together with the chaperonin GroEL, plays an essential role in assisting protein folding. The GroEL-GroES system forms a nano-cage that allows encapsulation of the non-native substrate proteins and provides a physical environment optimized to promote and accelerate protein folding. GroES binds to the apical surface of the GroEL ring, thereby capping the opening of the GroEL channel. The protein is Co-chaperonin GroES of Psychrobacter arcticus (strain DSM 17307 / VKM B-2377 / 273-4).